The following is a 120-amino-acid chain: Ribonuclease P protein component (120 aa).

The protein belongs to the RnpA family. As to quaternary structure, consists of a catalytic RNA component (M1 or rnpB) and a protein subunit.

The enzyme catalyses Endonucleolytic cleavage of RNA, removing 5'-extranucleotides from tRNA precursor.. Its function is as follows. RNaseP catalyzes the removal of the 5'-leader sequence from pre-tRNA to produce the mature 5'-terminus. It can also cleave other RNA substrates such as 4.5S RNA. The protein component plays an auxiliary but essential role in vivo by binding to the 5'-leader sequence and broadening the substrate specificity of the ribozyme. The polypeptide is Ribonuclease P protein component (Azoarcus sp. (strain BH72)).